Consider the following 288-residue polypeptide: Bifunctional protein FolD 2 (288 aa).

Residues 166–168 (GRS) and serine 191 contribute to the NADP(+) site.

It belongs to the tetrahydrofolate dehydrogenase/cyclohydrolase family. In terms of assembly, homodimer.

It catalyses the reaction (6R)-5,10-methylene-5,6,7,8-tetrahydrofolate + NADP(+) = (6R)-5,10-methenyltetrahydrofolate + NADPH. The catalysed reaction is (6R)-5,10-methenyltetrahydrofolate + H2O = (6R)-10-formyltetrahydrofolate + H(+). It functions in the pathway one-carbon metabolism; tetrahydrofolate interconversion. Catalyzes the oxidation of 5,10-methylenetetrahydrofolate to 5,10-methenyltetrahydrofolate and then the hydrolysis of 5,10-methenyltetrahydrofolate to 10-formyltetrahydrofolate. This Frankia alni (strain DSM 45986 / CECT 9034 / ACN14a) protein is Bifunctional protein FolD 2.